Consider the following 733-residue polypeptide: MSKNQSVSASEDEKEILNNNAEGHKPQRLFDQEPDLTEEALTKFENLDDCIYANKRIGTFKNNDFMECDCYEEFSDGVNHACDEDSDCINRLTLIECVNDLCSSCGNDCQNQRFQKKQYAPIAIFKTKHKGYGVRAEQDIEANQFIYEYKGEVIEEMEFRDRLIDYDQRHFKHFYFMMLQNGEFIDATIKGSLARFCNHSCSPNAYVNKWVVKDKLRMGIFAQRKILKGEEITFDYNVDRYGAQAQKCYCEEPNCIGFLGGKTQTDAASLLPQNIADALGVTVSMEKKWLKLKKLSGEPIIKNENENINIEFLQSLEVQPIDSPVDVTKIMSVLLQQDNKIIASKLLKRLFTIDDDSLRHQAIKLHGYTCFSKMLKLFITEQPQVDGKGNETEEDDIKFIKGILDFLLELPKTTRNGIESSQIDNVVKTLPAKFPFLKPNCDELLEKWSKFETYKRITKKDINVAASKMIDLRRVRLPPGWEIIHENGRPLYYNAEQKTKLHYPPSGSSKVFSSRSNTQVNSPSSSGIPKTPGALDSKKHKLSDEEYERKKQKRLEYERIALERAKQEELESLKQKLKLENERKSVLEDIIAEANKQKELQKEEAKKLVEAKEAKRLKRKTVSQSQRLEHNWNKFFASFVPNLIKKNPQSKQFDHENIKQCAKDIVKILTTKELKKDSSRAPPDDLTKGKRHKVKEFINSYMDKIILKKKQKKALALSSASTRMSSPPPSTSS.

The tract at residues 1–32 (MSKNQSVSASEDEKEILNNNAEGHKPQRLFDQ) is disordered. Position 10 is a phosphoserine (Ser-10). Positions 22–31 (EGHKPQRLFD) are enriched in basic and acidic residues. The region spanning 63 to 118 (NDFMECDCYEEFSDGVNHACDEDSDCINRLTLIECVNDLCSSCGNDCQNQRFQKKQ) is the AWS domain. The SET domain occupies 120–237 (APIAIFKTKH…KGEEITFDYN (118 aa)). Residues 244 to 260 (QAQKCYCEEPNCIGFLG) form the Post-SET domain. The WW domain occupies 475-507 (VRLPPGWEIIHENGRPLYYNAEQKTKLHYPPSG). 2 disordered regions span residues 504–548 (PPSG…EEYE) and 672–692 (KELKKDSSRAPPDDLTKGKRH). Positions 506 to 528 (SGSSKVFSSRSNTQVNSPSSSGI) are enriched in polar residues. Ser-522 is subject to Phosphoserine. Positions 548-630 (ERKKQKRLEY…TVSQSQRLEH (83 aa)) form a coiled coil. The binding to RNA polymerase II CTD stretch occupies residues 619-718 (RKTVSQSQRL…KKQKKALALS (100 aa)). Residues 672–688 (KELKKDSSRAPPDDLTK) show a composition bias toward basic and acidic residues.

Belongs to the class V-like SAM-binding methyltransferase superfamily. Histone-lysine methyltransferase family. SET2 subfamily. Interacts with the RNA polymerase II hyperphosphorylated CTD. Interacts with CYC8.

Its subcellular location is the nucleus. It is found in the chromosome. It carries out the reaction L-lysyl(36)-[histone H3] + 3 S-adenosyl-L-methionine = N(6),N(6),N(6)-trimethyl-L-lysyl(36)-[histone H3] + 3 S-adenosyl-L-homocysteine + 3 H(+). In terms of biological role, histone methyltransferase that trimethylates histone H3 'Lys-36' forming H3K36me3. Involved in transcription elongation as well as in transcription repression. The methyltransferase activity requires the recruitment to the RNA polymerase II, which is CTK1 dependent. This is Histone-lysine N-methyltransferase, H3 lysine-36 specific (SET2) from Saccharomyces cerevisiae (strain ATCC 204508 / S288c) (Baker's yeast).